The primary structure comprises 179 residues: Peptidyl-tRNA hydrolase (179 aa).

A tRNA-binding site is contributed by Tyr-15. The active-site Proton acceptor is His-20. 3 residues coordinate tRNA: Tyr-66, Asn-68, and Asn-114.

Belongs to the PTH family. Monomer.

The protein resides in the cytoplasm. The enzyme catalyses an N-acyl-L-alpha-aminoacyl-tRNA + H2O = an N-acyl-L-amino acid + a tRNA + H(+). In terms of biological role, hydrolyzes ribosome-free peptidyl-tRNAs (with 1 or more amino acids incorporated), which drop off the ribosome during protein synthesis, or as a result of ribosome stalling. Catalyzes the release of premature peptidyl moieties from peptidyl-tRNA molecules trapped in stalled 50S ribosomal subunits, and thus maintains levels of free tRNAs and 50S ribosomes. The sequence is that of Peptidyl-tRNA hydrolase from Chlamydia trachomatis serovar L2b (strain UCH-1/proctitis).